A 781-amino-acid polypeptide reads, in one-letter code: MAESMQRIASAFESARDLTLEAAAVASSRLGESSYFHYSKSIDSESLPGLLNSRYTREVRDGMKRVMSLMGSGDSSIELETHFADIVKNIGSDDVKVRRMVSVYLLRYAETNPNLALLSINSIQRSLSDSNPDVRALALKTLSDINIASLYPIILHSLKKTVIDSSEVVRCQVAMTLLKLFKEQGISIKDDVMPMLKSLLADSEPSVVSAALLLFQKAFAQELQLLHGHYRRYCSILNQLTENAQAIMIDIFIAYAKEYLPRPMVRDTSSDAEAIQLPDSFNQIPFPVYDVEYDHDLNLFLSSLKKLLHSPNAMVIVAVSKAFYQLSSPKTFKDSGIVDSLLRLTVSSYICSEIKELVLQSILVYCCSDPSLFRSHYKRFFLMPSDTENISIFKLKILSILVSDSNCKHIVNELKFVAGTEQSASILVEVSNTLSVCAQISSKWSSQIISWLLDRISSNTPIDKEVTASQINVLRSLIQKDPIKHIATVVKLSKMLSNHDLLPSAKAPIIWLLGEYVQVEPRICPDVLRRLLPQFSKEHAHVRLQILNLAAKLLSHDVDSYSGDMEYDIGTSRIGQMFEAALQLAKFDDEYDVRDRARMLASIFEQKRYEIATLLLQAPKPYPMASLNYCRDSFNLSALNLYPDMENYYELLPWNADPQASDRTPCEVKDYSKLKNSFSSSSYFGRNEVEFTNKPKRSASVSSVPSNTFTSSHGKKYQLQSLDEFFSDVSARQSVPKAKRVIIEESTSEETDHTDDESGSSSGDESTESSYVSSSEEETTE.

5 HEAT repeats span residues 113–151 (PNLALLSINSIQRSLSDSNPDVRALALKTLSDINIASLY), 153–186 (IILHSLKKTVIDSSEVVRCQVAMTLLKLFKEQGI), 187–224 (SIKDDVMPMLKSLLADSEPSVVSAALLLFQKAFAQELQ), 294–332 (DHDLNLFLSSLKKLLHSPNAMVIVAVSKAFYQLSSPKTF), and 521–559 (PRICPDVLRRLLPQFSKEHAHVRLQILNLAAKLLSHDVD). Disordered regions lie at residues 694 to 713 (KPKRSASVSSVPSNTFTSSH) and 731 to 781 (ARQS…ETTE). A compositionally biased stretch (polar residues) spans 699-712 (ASVSSVPSNTFTSS). Acidic residues predominate over residues 746-758 (STSEETDHTDDES). The segment covering 759 to 774 (GSSSGDESTESSYVSS) has biased composition (low complexity).

The protein belongs to the adaptor complexes large subunit family. As to quaternary structure, adaptor protein complex 3 (AP-3) is a heterotetramer composed of 2 large adaptins (APL5 and APL6), a medium adaptin (APM3) and a small adaptin (APS3).

Its subcellular location is the golgi apparatus. It is found in the cytoplasmic vesicle. The protein localises to the clathrin-coated vesicle membrane. Its function is as follows. Part of the AP-3 complex, an adaptor-related complex which is not clathrin-associated. The complex is associated with the Golgi region as well as more peripheral structures. It facilitates the budding of vesicles from the Golgi membrane and may be directly involved in trafficking to the vacuole. In Eremothecium gossypii (strain ATCC 10895 / CBS 109.51 / FGSC 9923 / NRRL Y-1056) (Yeast), this protein is AP-3 complex subunit beta (APL6).